We begin with the raw amino-acid sequence, 54 residues long: ATP synthase protein 8 (54 aa).

Residues 13-32 (ITFTFVIITLMVYILSKYIL) traverse the membrane as a helical segment.

The protein belongs to the ATPase protein 8 family. In terms of assembly, F-type ATPases have 2 components, CF(1) - the catalytic core - and CF(0) - the membrane proton channel.

The protein localises to the mitochondrion membrane. In terms of biological role, mitochondrial membrane ATP synthase (F(1)F(0) ATP synthase or Complex V) produces ATP from ADP in the presence of a proton gradient across the membrane which is generated by electron transport complexes of the respiratory chain. F-type ATPases consist of two structural domains, F(1) - containing the extramembraneous catalytic core and F(0) - containing the membrane proton channel, linked together by a central stalk and a peripheral stalk. During catalysis, ATP synthesis in the catalytic domain of F(1) is coupled via a rotary mechanism of the central stalk subunits to proton translocation. Part of the complex F(0) domain. Minor subunit located with subunit a in the membrane. In Neurospora crassa (strain ATCC 24698 / 74-OR23-1A / CBS 708.71 / DSM 1257 / FGSC 987), this protein is ATP synthase protein 8 (atp-8).